Consider the following 640-residue polypeptide: Threonine--tRNA ligase (640 aa).

In terms of domain architecture, TGS spans 1-61; it reads MPIITLPNGD…TEDSTLQIIT (61 aa). The segment at 242-533 is catalytic; that stretch reads DHRKIGKALD…LIEHYAGFMP (292 aa). Residues Cys-333, His-384, and His-510 each contribute to the Zn(2+) site.

It belongs to the class-II aminoacyl-tRNA synthetase family. In terms of assembly, homodimer. Zn(2+) serves as cofactor.

It localises to the cytoplasm. The catalysed reaction is tRNA(Thr) + L-threonine + ATP = L-threonyl-tRNA(Thr) + AMP + diphosphate + H(+). Functionally, catalyzes the attachment of threonine to tRNA(Thr) in a two-step reaction: L-threonine is first activated by ATP to form Thr-AMP and then transferred to the acceptor end of tRNA(Thr). Also edits incorrectly charged L-seryl-tRNA(Thr). This is Threonine--tRNA ligase from Acinetobacter baumannii (strain AB307-0294).